The sequence spans 1226 residues: Methionine synthase (1226 aa).

The 321-residue stretch at arginine 6–valine 326 folds into the Hcy-binding domain. The Zn(2+) site is built by cysteine 248, cysteine 311, and cysteine 312. The 262-residue stretch at phenylalanine 357 to glutamate 618 folds into the Pterin-binding domain. The 95-residue stretch at serine 651–serine 745 folds into the B12-binding N-terminal domain. Residues glutamate 695, glycine 757 to aspartate 761, histidine 760, serine 805, threonine 809, and alanine 861 contribute to the methylcob(III)alamin site. The region spanning asparagine 747–glutamate 882 is the B12-binding domain. In terms of domain architecture, AdoMet activation spans lysine 898–glycine 1226. S-adenosyl-L-methionine is bound by residues aspartate 948, arginine 1136, and tyrosine 1191–phenylalanine 1192.

The protein belongs to the vitamin-B12 dependent methionine synthase family. Methylcob(III)alamin is required as a cofactor. Zn(2+) serves as cofactor.

The enzyme catalyses (6S)-5-methyl-5,6,7,8-tetrahydrofolate + L-homocysteine = (6S)-5,6,7,8-tetrahydrofolate + L-methionine. It participates in amino-acid biosynthesis; L-methionine biosynthesis via de novo pathway; L-methionine from L-homocysteine (MetH route): step 1/1. Its function is as follows. Catalyzes the transfer of a methyl group from methyl-cobalamin to homocysteine, yielding enzyme-bound cob(I)alamin and methionine. Subsequently, remethylates the cofactor using methyltetrahydrofolate. The chain is Methionine synthase (metH) from Vibrio vulnificus (strain YJ016).